We begin with the raw amino-acid sequence, 91 residues long: Large ribosomal subunit protein uL22 (91 aa).

This sequence belongs to the universal ribosomal protein uL22 family. In terms of assembly, part of the 50S ribosomal subunit.

In terms of biological role, this protein binds specifically to 23S rRNA; its binding is stimulated by other ribosomal proteins, e.g. L4, L17, and L20. It is important during the early stages of 50S assembly. It makes multiple contacts with different domains of the 23S rRNA in the assembled 50S subunit and ribosome. The globular domain of the protein is located near the polypeptide exit tunnel on the outside of the subunit, while an extended beta-hairpin is found that lines the wall of the exit tunnel in the center of the 70S ribosome. The protein is Large ribosomal subunit protein uL22 (rplV) of Loofah witches'-broom phytoplasma.